A 590-amino-acid polypeptide reads, in one-letter code: MADRQDAERSGAGPARQSVPVASLVAEFLQEHGVDRVFGLQGGHIQPIWDQLARRGVRIVDVRDEGSAVHMAHAHTELTGQTAVAMVTAGPGVTNTVTAVANASVSRIPLLVIGGCPPIPQSNMGPLQDIPHTAILEPITRLARTLRSADQVLREFDEAWARASGDRGEPGPVYLEIPTDVLRRDVPPALQMREHLRAKPKRRPQPHPDDVAAVADLIRAAEKPAIISGRGARTTDGTDLVRLLDASGAAYLDTQESRGLVPDSHPAAVGSARSAVMRDTDLLITVGRQLDYQLGMGSPAVFPHAKVVRIADTASELIDNRRGEVEILAEPGAALAAIADALKDHTPDTSWRDELKAKHRKRAEDYRQALHSTENGADGHIHPNRIFGALDALDGDVLDLGETIMIADGGDLLSFGRLGITKARRYLDAGAFGCLGVATPFAIGAALAYPDRPVVAVTGDGAFGITATEIDTAVRHDAKIVVIVSNNRAWNIERYDQAENYGLVVGTDLADSDYAGVARAFGAHGERVTDPAELEGAIRRALANAPALVDVVTTQDAASPDSGKGLGFVPDYQALTPWNDAEVARRQEGI.

Residues Gly-43, Gln-128, Gln-255, 273–274 (RS), and Arg-362 contribute to the 2-hydroxyisobutanoyl-CoA site. A thiamine diphosphate-binding site is contributed by 410 to 412 (GDL). Position 417 (Arg-417) interacts with 2-hydroxyisobutanoyl-CoA. Residue Gly-433 participates in thiamine diphosphate binding. A Mg(2+)-binding site is contributed by Asp-460. Residues 461–462 (GA) and 487–492 (NRAWNI) each bind thiamine diphosphate. Residues Asn-487 and Ala-489 each coordinate Mg(2+). Glu-493 functions as the Proton acceptor in the catalytic mechanism. 561–564 (DSGK) is a binding site for 2-hydroxyisobutanoyl-CoA. Residues 566-590 (LGFVPDYQALTPWNDAEVARRQEGI) form a C-terminal lid region.

It belongs to the TPP enzyme family. In terms of assembly, a homotetramer formed by a dimer of dimers; active sites are located in the dimer interface. Mg(2+) is required as a cofactor. Thiamine diphosphate serves as cofactor.

The enzyme catalyses 2-hydroxyisobutanoyl-CoA = formyl-CoA + acetone. Activity is stimulated by thiamine diphosphate. In terms of biological role, a lyase that reversibly degrades 2-hydroxyisobutyryl-CoA (2-HIB-CoA) to acetone and formyl-CoA. Probably also cleaves 2-hydroxy-2-methylbutyryl-CoA to butanone and formyl-CoA. Does not act on 2-hydroxy-2-ethylbutyryl-CoA. A C-terminal lid closes the active site upon substrate binding, and with residues Leu-127 and Ile-492 restricts the size of the active site cavity so it can only use short-chain (C4 and C5) acyl substrates. Part of a pathway that allows cells to grow on 2-methylpropane-1,2-diol or 2-hydroxyisobutyric acid (2-HIBA) as a sole carbon source. In Actinomycetospora chiangmaiensis (strain DSM 45062 / JCM 15998 / CCTCC AA 205017 / NBRC 104400 / YIM 0006), this protein is 2-hydroxyacyl-CoA lyase.